Reading from the N-terminus, the 640-residue chain is MGFSGSRANTALGAWSKWLTLCLAMTQPFSVTAKSAADYYVHSLPGQPEGPLLKMHAGHIEISPETSGNLFFWHFENRHIADKPRTVVWLNGGPGCSSEDGALMEIGPYRLIDKETLNYTEGSWDEFANLLFVDQPVGTGFSYGSTEHYVHELDEMASQFVTFLEKWFEIFPHYEPDDLYFAGESYAGQYIPYIARAILDRNKKQDVLANNRVWNLKGLLIGNGWISPQHQYPAYLPYVYQEGVVQGGTQEANLIEAKAAKCMKELNVEDTTGTVHIPDCEDILQAILDYTHKGKRCINMYDIRLTDEYSACGMNWPPDLKDVQPYLRRKDVVKALHINEEKQTGWTECAGAVGSSFKARKSKPAVELLPGLLEEGLPILLFSGQKDLICNHIGTEDMIKNMKWSGGTGFELSPGVWAPRQYWTFEGEPAGIYQQARNLTYVLFYNASHMVPFDYPRRTRDMLDKFLGVDITHIGGDPADSRIDGEKGPTTSVGAHPNSTAAAEREKEKLNTAAWKAYYKSGEVALIIVSTAAVVWGIFLWRSRRKHQSSGYRSIYPMLGLNSTGSLGRFSHKHSRGNGDIEAADFDETELDGQPSQAFLSRSSGDGETYAVGEESSDEEDGASDGQQLMFDQSRGEGRS.

A signal peptide spans 1–24 (MGFSGSRANTALGAWSKWLTLCLA). The Lumenal segment spans residues 25–520 (MTQPFSVTAK…NTAAWKAYYK (496 aa)). Residue Asn-118 is glycosylated (N-linked (GlcNAc...) asparagine). Active-site residues include Ser-185 and Asp-387. 2 N-linked (GlcNAc...) asparagine glycosylation sites follow: Asn-438 and Asn-446. His-449 is a catalytic residue. The tract at residues 478–503 (PADSRIDGEKGPTTSVGAHPNSTAAA) is disordered. Residues 489-501 (PTTSVGAHPNSTA) are compositionally biased toward polar residues. An N-linked (GlcNAc...) asparagine glycan is attached at Asn-498. A helical transmembrane segment spans residues 521-541 (SGEVALIIVSTAAVVWGIFLW). At 542 to 640 (RSRRKHQSSG…FDQSRGEGRS (99 aa)) the chain is on the cytoplasmic side. Residues 590 to 640 (ELDGQPSQAFLSRSSGDGETYAVGEESSDEEDGASDGQQLMFDQSRGEGRS) are disordered. Residues 594 to 606 (QPSQAFLSRSSGD) are compositionally biased toward polar residues.

This sequence belongs to the peptidase S10 family.

The protein resides in the golgi apparatus. It is found in the trans-Golgi network membrane. It catalyses the reaction Preferential release of a C-terminal arginine or lysine residue.. In terms of biological role, protease with a carboxypeptidase B-like function involved in the C-terminal processing of the lysine and arginine residues from protein precursors. Promotes cell fusion and is involved in the programmed cell death. The sequence is that of Pheromone-processing carboxypeptidase KEX1 (KEX1) from Paracoccidioides lutzii (strain ATCC MYA-826 / Pb01) (Paracoccidioides brasiliensis).